Consider the following 342-residue polypeptide: 4-amino-5-hydroxymethyl-2-methylpyrimidine phosphate synthase (342 aa).

Lysine 62 is subject to N6-(pyridoxal phosphate)lysine. Histidine 66 is an active-site residue. 115 to 118 is a pyridoxal 5'-phosphate binding site; the sequence is GEFG. The CCCFC; essential for catalytic activity, may be the site of iron coordination motif lies at 195 to 199; the sequence is CCCFC.

It belongs to the NMT1/THI5 family. Homodimer. It depends on Fe cation as a cofactor.

The enzyme catalyses N(6)-(pyridoxal phosphate)-L-lysyl-[4-amino-5-hydroxymethyl-2-methylpyrimidine phosphate synthase] + L-histidyl-[4-amino-5-hydroxymethyl-2-methylpyrimidine phosphate synthase] + 2 Fe(3+) + 4 H2O = L-lysyl-[4-amino-5-hydroxymethyl-2-methylpyrimidine phosphate synthase] + (2S)-2-amino-5-hydroxy-4-oxopentanoyl-[4-amino-5-hydroxymethyl-2-methylpyrimidine phosphate synthase] + 4-amino-2-methyl-5-(phosphooxymethyl)pyrimidine + 3-oxopropanoate + 2 Fe(2+) + 2 H(+). The protein operates within cofactor biosynthesis; thiamine diphosphate biosynthesis. In terms of biological role, responsible for the formation of the pyrimidine heterocycle in the thiamine biosynthesis pathway. Catalyzes the formation of hydroxymethylpyrimidine phosphate (HMP-P) from histidine and pyridoxal phosphate (PLP). The protein uses PLP and the active site histidine to form HMP-P, generating an inactive enzyme. The enzyme can only undergo a single turnover, which suggests it is a suicide enzyme. The sequence is that of 4-amino-5-hydroxymethyl-2-methylpyrimidine phosphate synthase from Aspergillus parasiticus.